The chain runs to 344 residues: Dihydroorotase (344 aa).

Residues histidine 13 and histidine 15 each coordinate Zn(2+). Residues histidine 15 to arginine 17 and asparagine 41 each bind substrate. Zn(2+) is bound by residues lysine 98, histidine 135, and histidine 173. Lysine 98 is modified (N6-carboxylysine). Histidine 135 lines the substrate pocket. Leucine 218 contacts substrate. Position 246 (aspartate 246) interacts with Zn(2+). Aspartate 246 is a catalytic residue. Substrate-binding residues include histidine 250 and alanine 262.

The protein belongs to the metallo-dependent hydrolases superfamily. DHOase family. Class II DHOase subfamily. Homodimer. Zn(2+) serves as cofactor.

The enzyme catalyses (S)-dihydroorotate + H2O = N-carbamoyl-L-aspartate + H(+). It participates in pyrimidine metabolism; UMP biosynthesis via de novo pathway; (S)-dihydroorotate from bicarbonate: step 3/3. In terms of biological role, catalyzes the reversible cyclization of carbamoyl aspartate to dihydroorotate. The chain is Dihydroorotase from Shewanella woodyi (strain ATCC 51908 / MS32).